Here is a 637-residue protein sequence, read N- to C-terminus: Biosynthetic arginine decarboxylase (637 aa).

At Lys-110 the chain carries N6-(pyridoxal phosphate)lysine. Ile-290–Tyr-300 is a substrate binding site.

It belongs to the Orn/Lys/Arg decarboxylase class-II family. SpeA subfamily. It depends on Mg(2+) as a cofactor. The cofactor is pyridoxal 5'-phosphate.

The catalysed reaction is L-arginine + H(+) = agmatine + CO2. Its function is as follows. Catalyzes the biosynthesis of agmatine from arginine. The polypeptide is Biosynthetic arginine decarboxylase (Pseudomonas putida (strain ATCC 47054 / DSM 6125 / CFBP 8728 / NCIMB 11950 / KT2440)).